The following is a 218-amino-acid chain: Alkylmercury lyase (218 aa).

It belongs to the MerB family.

It carries out the reaction an alkylmercury + H(+) = an alkane + Hg(2+). Cleaves the carbon-mercury bond of organomercurials such as phenylmercuric acetate. One product is Hg(2+), which is subsequently detoxified by the mercuric reductase. This Bacillus cereus protein is Alkylmercury lyase (merB1).